The following is a 286-amino-acid chain: Polyamine aminopropyltransferase (286 aa).

The region spanning 5 to 238 is the PABS domain; the sequence is TMWHETLHDQ…GIMTFAWATD (234 aa). Q33 is a binding site for S-methyl-5'-thioadenosine. The spermidine site is built by H64 and D88. S-methyl-5'-thioadenosine is bound by residues E108 and 140-141; that span reads DG. Residue D158 is the Proton acceptor of the active site. 158-161 serves as a coordination point for spermidine; the sequence is DCTD. P165 is an S-methyl-5'-thioadenosine binding site.

It belongs to the spermidine/spermine synthase family. Homodimer or homotetramer.

Its subcellular location is the cytoplasm. It catalyses the reaction S-adenosyl 3-(methylsulfanyl)propylamine + putrescine = S-methyl-5'-thioadenosine + spermidine + H(+). The protein operates within amine and polyamine biosynthesis; spermidine biosynthesis; spermidine from putrescine: step 1/1. Catalyzes the irreversible transfer of a propylamine group from the amino donor S-adenosylmethioninamine (decarboxy-AdoMet) to putrescine (1,4-diaminobutane) to yield spermidine. The polypeptide is Polyamine aminopropyltransferase (Salmonella enteritidis PT4 (strain P125109)).